The primary structure comprises 301 residues: Transposase InsD for insertion element IS2D (301 aa).

The region spanning Lys106–Ala289 is the Integrase catalytic domain.

Its function is as follows. Involved in the transposition of the insertion sequence IS2. This Escherichia coli (strain K12) protein is Transposase InsD for insertion element IS2D (insD2).